A 295-amino-acid polypeptide reads, in one-letter code: CRISPR-associated endonuclease Cas1 2 (295 aa).

3 residues coordinate Mn(2+): Glu155, His215, and Glu230.

The protein belongs to the CRISPR-associated endonuclease Cas1 family. Homodimer, forms a heterotetramer with a Cas2 homodimer. Requires Mg(2+) as cofactor. It depends on Mn(2+) as a cofactor.

Functionally, CRISPR (clustered regularly interspaced short palindromic repeat), is an adaptive immune system that provides protection against mobile genetic elements (viruses, transposable elements and conjugative plasmids). CRISPR clusters contain spacers, sequences complementary to antecedent mobile elements, and target invading nucleic acids. CRISPR clusters are transcribed and processed into CRISPR RNA (crRNA). Acts as a dsDNA endonuclease. Involved in the integration of spacer DNA into the CRISPR cassette. This Pyrobaculum aerophilum (strain ATCC 51768 / DSM 7523 / JCM 9630 / CIP 104966 / NBRC 100827 / IM2) protein is CRISPR-associated endonuclease Cas1 2.